Here is a 107-residue protein sequence, read N- to C-terminus: Thioredoxin (107 aa).

In terms of domain architecture, Thioredoxin spans 2–107 (SATPQVSDAS…TLASTLEKYL (106 aa)). A disulfide bridge links Cys-32 with Cys-35.

This sequence belongs to the thioredoxin family.

Component of the thioredoxin-thioredoxin reductase system. Participates in various redox reactions through the reversible oxidation of its active center dithiol to a disulfide and catalyzes dithiol-disulfide exchange reactions. The protein is Thioredoxin (trxA) of Synechocystis sp. (strain ATCC 27184 / PCC 6803 / Kazusa).